We begin with the raw amino-acid sequence, 493 residues long: Transcript termination protein A18 (493 aa).

Residues 100–256 (MIELKRPLYI…NSIINIAKLS (157 aa)) form the Helicase ATP-binding domain. Residue 113-120 (LACGFGKT) participates in ATP binding. A DESH box motif is present at residues 206–209 (DESH).

This sequence belongs to the helicase family. Poxviruses subfamily. In terms of assembly, interacts with G2. Might be part of a transcription complex composed at least of G2, A18, and H5.

The protein localises to the virion. Functionally, DNA helicase which seems to act as a postreplicative transcription termination factor. Involved in ATP-dependent release of nascent RNA. Forms a stable complex with single-stranded DNA, and to a lesser extent RNA. The polypeptide is Transcript termination protein A18 (Camelus).